A 385-amino-acid polypeptide reads, in one-letter code: Homoserine O-succinyltransferase (385 aa).

An AB hydrolase-1 domain is found at 45 to 355 (NAVLVCHALN…SHGHDAFLLD (311 aa)). Ser-151 acts as the Nucleophile in catalysis. Residue Arg-221 coordinates substrate. Residues Asp-316 and His-349 contribute to the active site. Substrate is bound at residue Asp-350.

This sequence belongs to the AB hydrolase superfamily. MetX family. In terms of assembly, homodimer.

It localises to the cytoplasm. The enzyme catalyses L-homoserine + succinyl-CoA = O-succinyl-L-homoserine + CoA. Its pathway is amino-acid biosynthesis; L-methionine biosynthesis via de novo pathway; O-succinyl-L-homoserine from L-homoserine: step 1/1. Transfers a succinyl group from succinyl-CoA to L-homoserine, forming succinyl-L-homoserine. This is Homoserine O-succinyltransferase from Herminiimonas arsenicoxydans.